The following is a 25-amino-acid chain: Bombinin-like peptide 4 (25 aa).

F25 carries the phenylalanine amide modification.

The protein belongs to the bombinin family. As to expression, expressed by the skin glands.

It is found in the secreted. Its function is as follows. Has antimicrobial activity, but no hemolytic activity. Preference on killing Gram-negative non-enteric bacteria. The polypeptide is Bombinin-like peptide 4 (Bombina orientalis (Oriental fire-bellied toad)).